The sequence spans 177 residues: Nucleoside triphosphate/diphosphate phosphatase (177 aa).

Catalysis depends on R23, which acts as the Proton donor. N87, D103, D105, D107, D120, and E123 together coordinate Mg(2+).

It belongs to the Ntdp family. It depends on Mg(2+) as a cofactor.

The catalysed reaction is a ribonucleoside 5'-triphosphate + H2O = a ribonucleoside 5'-diphosphate + phosphate + H(+). It catalyses the reaction a ribonucleoside 5'-diphosphate + H2O = a ribonucleoside 5'-phosphate + phosphate + H(+). In terms of biological role, has nucleoside phosphatase activity towards nucleoside triphosphates and nucleoside diphosphates. In Streptococcus pneumoniae serotype 19F (strain G54), this protein is Nucleoside triphosphate/diphosphate phosphatase.